The primary structure comprises 134 residues: Urease subunit beta (134 aa).

The protein belongs to the urease beta subunit family. As to quaternary structure, heterotrimer of UreA (gamma), UreB (beta) and UreC (alpha) subunits. Three heterotrimers associate to form the active enzyme.

It is found in the cytoplasm. The enzyme catalyses urea + 2 H2O + H(+) = hydrogencarbonate + 2 NH4(+). It participates in nitrogen metabolism; urea degradation; CO(2) and NH(3) from urea (urease route): step 1/1. This Staphylococcus saprophyticus subsp. saprophyticus (strain ATCC 15305 / DSM 20229 / NCIMB 8711 / NCTC 7292 / S-41) protein is Urease subunit beta.